A 208-amino-acid polypeptide reads, in one-letter code: Uracil phosphoribosyltransferase (208 aa).

Residues R77, R102, and 129–137 (DPMLATGNS) contribute to the 5-phospho-alpha-D-ribose 1-diphosphate site. Uracil is bound by residues I193 and 198–200 (GDA). D199 contributes to the 5-phospho-alpha-D-ribose 1-diphosphate binding site.

Belongs to the UPRTase family. Mg(2+) serves as cofactor.

The enzyme catalyses UMP + diphosphate = 5-phospho-alpha-D-ribose 1-diphosphate + uracil. It functions in the pathway pyrimidine metabolism; UMP biosynthesis via salvage pathway; UMP from uracil: step 1/1. Allosterically activated by GTP. Its function is as follows. Catalyzes the conversion of uracil and 5-phospho-alpha-D-ribose 1-diphosphate (PRPP) to UMP and diphosphate. In Mycoplasmopsis pulmonis (strain UAB CTIP) (Mycoplasma pulmonis), this protein is Uracil phosphoribosyltransferase.